The following is a 928-amino-acid chain: Isoleucine--tRNA ligase (928 aa).

The short motif at 57-67 (PFANGNIHMGH) is the 'HIGH' region element. E552 contributes to the L-isoleucyl-5'-AMP binding site. Residues 593-597 (KMSKS) carry the 'KMSKS' region motif. K596 contacts ATP. 4 residues coordinate Zn(2+): C887, C890, C907, and C910.

It belongs to the class-I aminoacyl-tRNA synthetase family. IleS type 1 subfamily. As to quaternary structure, monomer. Requires Zn(2+) as cofactor.

The protein localises to the cytoplasm. It carries out the reaction tRNA(Ile) + L-isoleucine + ATP = L-isoleucyl-tRNA(Ile) + AMP + diphosphate. Functionally, catalyzes the attachment of isoleucine to tRNA(Ile). As IleRS can inadvertently accommodate and process structurally similar amino acids such as valine, to avoid such errors it has two additional distinct tRNA(Ile)-dependent editing activities. One activity is designated as 'pretransfer' editing and involves the hydrolysis of activated Val-AMP. The other activity is designated 'posttransfer' editing and involves deacylation of mischarged Val-tRNA(Ile). The polypeptide is Isoleucine--tRNA ligase (Lacticaseibacillus paracasei (strain ATCC 334 / BCRC 17002 / CCUG 31169 / CIP 107868 / KCTC 3260 / NRRL B-441) (Lactobacillus paracasei)).